Consider the following 157-residue polypeptide: Ribosome maturation factor RimP (157 aa).

This sequence belongs to the RimP family.

Its subcellular location is the cytoplasm. Functionally, required for maturation of 30S ribosomal subunits. The protein is Ribosome maturation factor RimP of Bacillus licheniformis (strain ATCC 14580 / DSM 13 / JCM 2505 / CCUG 7422 / NBRC 12200 / NCIMB 9375 / NCTC 10341 / NRRL NRS-1264 / Gibson 46).